A 124-amino-acid chain; its full sequence is Small ribosomal subunit protein uS12 (124 aa).

At Asp89 the chain carries 3-methylthioaspartic acid. The disordered stretch occupies residues 102–124 (LDTSGVNNRKHGRSKYGTKRPKS). Residues 109-124 (NRKHGRSKYGTKRPKS) show a composition bias toward basic residues.

This sequence belongs to the universal ribosomal protein uS12 family. As to quaternary structure, part of the 30S ribosomal subunit. Contacts proteins S8 and S17. May interact with IF1 in the 30S initiation complex.

Functionally, with S4 and S5 plays an important role in translational accuracy. Its function is as follows. Interacts with and stabilizes bases of the 16S rRNA that are involved in tRNA selection in the A site and with the mRNA backbone. Located at the interface of the 30S and 50S subunits, it traverses the body of the 30S subunit contacting proteins on the other side and probably holding the rRNA structure together. The combined cluster of proteins S8, S12 and S17 appears to hold together the shoulder and platform of the 30S subunit. The chain is Small ribosomal subunit protein uS12 from Francisella philomiragia subsp. philomiragia (strain ATCC 25017 / CCUG 19701 / FSC 153 / O#319-036).